Here is a 375-residue protein sequence, read N- to C-terminus: SSTETPPSYNQLNYNENLLRFFNSKPVTAPVELDPPKVEPSYVSSAREDAHRTLSPVQGFEGSGGTGSSGNFTTGSNLHMSSVTNTSNAGTGTSGTGNSGGGGGGGGGGGPGNGAVTPVTLTESLLNKHNDEMEKFMLKKHRESRGRSGEKNKKSANDTLKMVEYSGPGPGPGHGHGIKRGGSHSWEGEANKPKQLLTLNTGGMPPLLDIHTSSASLSKCQASGAGGGGSGSVGGTGNIGSGGSNAQPSTNQYAQSGLSCTQNINLWPPFSVGITTPTSVLSTHTAVAQSSFSTQHNLFPTFYYIPASIAASSPSGTSPNPRPHKHTLVHKSAEQPSTSQAAAATMPLQYMTGLMYPHPSLFYTHPAAAAATAMV.

Disordered regions lie at residues Thr28–Pro118, Lys140–Glu189, and Cys220–Ala254. A compositionally biased stretch (low complexity) spans Ser69–Thr91. Residues Gly92–Asn113 are compositionally biased toward gly residues. Residues Arg145–Ala156 are compositionally biased toward basic and acidic residues. The segment covering Gly224–Gly243 has biased composition (gly residues). Residues Asn245–Ala254 are compositionally biased toward polar residues.

In terms of assembly, forms a heterodimer with timeless (TIM); the complex then translocates into the nucleus. In terms of processing, phosphorylated with a circadian rhythmicity, probably by the double-time protein (dbt). Phosphorylation could be implicated in the stability of per monomer and in the formation of heterodimer per-tim.

It localises to the nucleus. It is found in the cytoplasm. The protein localises to the perinuclear region. In terms of biological role, essential for biological clock functions. Determines the period length of circadian and ultradian rhythms; an increase in PER dosage leads to shortened circadian rhythms and a decrease leads to lengthened circadian rhythms. Essential for the circadian rhythmicity of locomotor activity, eclosion behavior, and for the rhythmic component of the male courtship song that originates in the thoracic nervous system. The biological cycle depends on the rhythmic formation and nuclear localization of the TIM-PER complex. Light induces the degradation of TIM, which promotes elimination of PER. Nuclear activity of the heterodimer coordinatively regulates PER and TIM transcription through a negative feedback loop. Behaves as a negative element in circadian transcriptional loop. Does not appear to bind DNA, suggesting indirect transcriptional inhibition. The sequence is that of Period circadian protein (per) from Drosophila capricorni (Fruit fly).